The sequence spans 367 residues: 3-isopropylmalate dehydrogenase (367 aa).

75–88 (GPKWDGIERSKRPE) provides a ligand contact to NAD(+). Substrate is bound by residues Arg95, Arg105, Arg133, and Asp230. 3 residues coordinate Mg(2+): Asp230, Asp254, and Asp258. 288 to 300 (GSAPDIAGQDIAN) is a binding site for NAD(+).

This sequence belongs to the isocitrate and isopropylmalate dehydrogenases family. LeuB type 1 subfamily. In terms of assembly, homodimer. Mg(2+) is required as a cofactor. The cofactor is Mn(2+).

Its subcellular location is the cytoplasm. The enzyme catalyses (2R,3S)-3-isopropylmalate + NAD(+) = 4-methyl-2-oxopentanoate + CO2 + NADH. It participates in amino-acid biosynthesis; L-leucine biosynthesis; L-leucine from 3-methyl-2-oxobutanoate: step 3/4. In terms of biological role, catalyzes the oxidation of 3-carboxy-2-hydroxy-4-methylpentanoate (3-isopropylmalate) to 3-carboxy-4-methyl-2-oxopentanoate. The product decarboxylates to 4-methyl-2 oxopentanoate. This chain is 3-isopropylmalate dehydrogenase, found in Psychrobacter cryohalolentis (strain ATCC BAA-1226 / DSM 17306 / VKM B-2378 / K5).